The sequence spans 195 residues: Nucleoid occlusion factor SlmA (195 aa).

The HTH tetR-type domain occupies 7–67 (TNRRAQILQA…GLIEFIEETL (61 aa)). The H-T-H motif DNA-binding region spans 30 to 49 (TTAKLAEKVGVSEAALYRHF). The stretch at 109 to 141 (DALMGEQDRLRARIAKLFERLETQLKQVLRERK) forms a coiled coil.

This sequence belongs to the nucleoid occlusion factor SlmA family. As to quaternary structure, homodimer. Interacts with FtsZ.

The protein resides in the cytoplasm. The protein localises to the nucleoid. Functionally, required for nucleoid occlusion (NO) phenomenon, which prevents Z-ring formation and cell division over the nucleoid. Acts as a DNA-associated cell division inhibitor that binds simultaneously chromosomal DNA and FtsZ, and disrupts the assembly of FtsZ polymers. SlmA-DNA-binding sequences (SBS) are dispersed on non-Ter regions of the chromosome, preventing FtsZ polymerization at these regions. This is Nucleoid occlusion factor SlmA from Alteromonas mediterranea (strain DSM 17117 / CIP 110805 / LMG 28347 / Deep ecotype).